A 157-amino-acid chain; its full sequence is MFFPTLLAVEAAEKGGLFDLDATLPLIAIQFLLLVAVLNSLFYEPVTRAIDSRNDYIRTTQAEAQERLDKAVSLTRQYESEISQARLQAQQVIAEAEAAAARIRSEKLAAVQAEIQQKLEAARLQVEQEKQAALEQLQQQVDAIAAQITQKLLGSAR.

A helical transmembrane segment spans residues 22–42 (ATLPLIAIQFLLLVAVLNSLF).

It belongs to the ATPase B chain family. F-type ATPases have 2 components, F(1) - the catalytic core - and F(0) - the membrane proton channel. F(1) has five subunits: alpha(3), beta(3), gamma(1), delta(1), epsilon(1). F(0) has four main subunits: a(1), b(1), b'(1) and c(10-14). The alpha and beta chains form an alternating ring which encloses part of the gamma chain. F(1) is attached to F(0) by a central stalk formed by the gamma and epsilon chains, while a peripheral stalk is formed by the delta, b and b' chains.

It is found in the cellular thylakoid membrane. Functionally, f(1)F(0) ATP synthase produces ATP from ADP in the presence of a proton or sodium gradient. F-type ATPases consist of two structural domains, F(1) containing the extramembraneous catalytic core and F(0) containing the membrane proton channel, linked together by a central stalk and a peripheral stalk. During catalysis, ATP synthesis in the catalytic domain of F(1) is coupled via a rotary mechanism of the central stalk subunits to proton translocation. Its function is as follows. Component of the F(0) channel, it forms part of the peripheral stalk, linking F(1) to F(0). The b'-subunit is a diverged and duplicated form of b found in plants and photosynthetic bacteria. The protein is ATP synthase subunit b' of Synechococcus sp. (strain JA-2-3B'a(2-13)) (Cyanobacteria bacterium Yellowstone B-Prime).